The sequence spans 457 residues: ATP-dependent protease ATPase subunit HslU (457 aa).

ATP-binding positions include I18 and 60–65; that span reads GVGKTE. A disordered region spans residues 142-171; the sequence is KQPGMGFFNPAAPEEQEEQPSADQSSTREK. The ATP site is built by D269, E335, and R407.

It belongs to the ClpX chaperone family. HslU subfamily. As to quaternary structure, a double ring-shaped homohexamer of HslV is capped on each side by a ring-shaped HslU homohexamer. The assembly of the HslU/HslV complex is dependent on binding of ATP.

It is found in the cytoplasm. ATPase subunit of a proteasome-like degradation complex; this subunit has chaperone activity. The binding of ATP and its subsequent hydrolysis by HslU are essential for unfolding of protein substrates subsequently hydrolyzed by HslV. HslU recognizes the N-terminal part of its protein substrates and unfolds these before they are guided to HslV for hydrolysis. The polypeptide is ATP-dependent protease ATPase subunit HslU (Maridesulfovibrio salexigens (strain ATCC 14822 / DSM 2638 / NCIMB 8403 / VKM B-1763) (Desulfovibrio salexigens)).